The primary structure comprises 142 residues: uncharacterized protein (142 aa).

Helical transmembrane passes span 3–23 (LIFIAKMLQYSFLPFSPFNLL), 30–50 (SVSWFITYSVIVSIWGFAVWI), and 91–111 (FFLLYLFLTASNLIVQLAYFS).

It is found in the membrane. This is an uncharacterized protein from Saccharomyces cerevisiae (strain ATCC 204508 / S288c) (Baker's yeast).